A 561-amino-acid chain; its full sequence is Urocanate hydratase (561 aa).

NAD(+) contacts are provided by residues 52–53 (GG), glutamine 130, 176–178 (GMG), glutamate 196, arginine 201, 242–243 (NA), 263–267 (QTSAH), 273–274 (YL), and tyrosine 322. Cysteine 410 is an active-site residue. An NAD(+)-binding site is contributed by glycine 492.

The protein belongs to the urocanase family. NAD(+) serves as cofactor.

Its subcellular location is the cytoplasm. It catalyses the reaction 4-imidazolone-5-propanoate = trans-urocanate + H2O. It participates in amino-acid degradation; L-histidine degradation into L-glutamate; N-formimidoyl-L-glutamate from L-histidine: step 2/3. Its function is as follows. Catalyzes the conversion of urocanate to 4-imidazolone-5-propionate. This Enterobacter sp. (strain 638) protein is Urocanate hydratase.